Consider the following 286-residue polypeptide: Pyridoxal kinase PdxY (286 aa).

Substrate contacts are provided by residues serine 9 and 44–45; that span reads TQ. ATP-binding residues include aspartate 111, glutamate 148, and lysine 181. Substrate is bound at residue aspartate 222.

The protein belongs to the pyridoxine kinase family. PdxY subfamily. As to quaternary structure, homodimer. Mg(2+) is required as a cofactor.

The catalysed reaction is pyridoxal + ATP = pyridoxal 5'-phosphate + ADP + H(+). It functions in the pathway cofactor metabolism; pyridoxal 5'-phosphate salvage; pyridoxal 5'-phosphate from pyridoxal: step 1/1. Pyridoxal kinase involved in the salvage pathway of pyridoxal 5'-phosphate (PLP). Catalyzes the phosphorylation of pyridoxal to PLP. The protein is Pyridoxal kinase PdxY of Actinobacillus succinogenes (strain ATCC 55618 / DSM 22257 / CCUG 43843 / 130Z).